The chain runs to 172 residues: 3-phenylpropionate/cinnamic acid dioxygenase subunit beta (172 aa).

The protein belongs to the bacterial ring-hydroxylating dioxygenase beta subunit family. In terms of assembly, this dioxygenase system consists of four proteins: the two subunits of the hydroxylase component (HcaE and HcaF), a ferredoxin (HcaC) and a ferredoxin reductase (HcaD).

It catalyses the reaction 3-phenylpropanoate + NADH + O2 + H(+) = 3-(cis-5,6-dihydroxycyclohexa-1,3-dien-1-yl)propanoate + NAD(+). The catalysed reaction is (E)-cinnamate + NADH + O2 + H(+) = (2E)-3-(cis-5,6-dihydroxycyclohexa-1,3-dien-1-yl)prop-2-enoate + NAD(+). The protein operates within aromatic compound metabolism; 3-phenylpropanoate degradation. In terms of biological role, part of the multicomponent 3-phenylpropionate dioxygenase. Converts 3-phenylpropionic acid (PP) and cinnamic acid (CI) into 3-phenylpropionate-dihydrodiol (PP-dihydrodiol) and cinnamic acid-dihydrodiol (CI-dihydrodiol), respectively. This Shigella flexneri serotype 5b (strain 8401) protein is 3-phenylpropionate/cinnamic acid dioxygenase subunit beta.